Here is a 346-residue protein sequence, read N- to C-terminus: MAIDLKKHKSRRIILTKQGKRTERHIPVLLQPVLAGLIPLVGAKVIDGTFGAGGYTRALLNAGAQVIALDRDPHAIREGQSLVDEFFPRLRLVQGNFSQLDCVVEEKVDAVILDIGVSSMQLDEAERGFSFQKDGPLDMRMAQTGFTAADVVNRLKSDELARIFKILGEERYARRIARMIEKRRCVQPFLRTGDLAHAIEVLVGRKSGERIHPATRVFQALRIYVNDEIGELARGLFAAERVLKPGGRLGVVSFHSLEDRMVKRFFSARSGESVRSRYLPEIEMAPATFFPLFKGGITANKEELERNPRSRSARLRIGVRTEAECLFADMKLFGLAKIASFEGGKK.

S-adenosyl-L-methionine contacts are provided by residues 53 to 55 (GGY), D70, F97, D114, and Q121.

It belongs to the methyltransferase superfamily. RsmH family.

It is found in the cytoplasm. It catalyses the reaction cytidine(1402) in 16S rRNA + S-adenosyl-L-methionine = N(4)-methylcytidine(1402) in 16S rRNA + S-adenosyl-L-homocysteine + H(+). In terms of biological role, specifically methylates the N4 position of cytidine in position 1402 (C1402) of 16S rRNA. The sequence is that of Ribosomal RNA small subunit methyltransferase H from Bartonella henselae (strain ATCC 49882 / DSM 28221 / CCUG 30454 / Houston 1) (Rochalimaea henselae).